Here is an 857-residue protein sequence, read N- to C-terminus: Trehalose transporter 1 (857 aa).

2 disordered regions span residues 1-28 and 62-202; these read MSGRDNRGAGGGGGGHQPLSNAMGKLKE and DPFL…QKAT. The Cytoplasmic portion of the chain corresponds to 1–392; that stretch reads MSGRDNRGAG…VYRPTTNPIY (392 aa). Position 9 is a phosphothreonine (Ala9). Phosphoserine is present on Gly12. Polar residues predominate over residues 69–81; it reads VSPQRHPQNTVRT. The span at 134–143 shows a compositional bias: basic and acidic residues; that stretch reads EIREHRDRQQ. Over residues 171–181 the composition is skewed to polar residues; the sequence is GNSNTNSNKAA. A phosphoserine mark is found at Ser248, Ser249, and Ser250. 2 disordered regions span residues 249 to 269 and 280 to 299; these read SSEEEFHKTRREFQGRKHQSL and VLQGSSTDSDEEGEDAEHKR. A phosphoserine mark is found at Ser320 and Ser322. The interval 327–346 is disordered; sequence LTSRQHFQQQRSISTDSRKS. The segment covering 330–341 has biased composition (polar residues); the sequence is RQHFQQQRSIST. A helical membrane pass occupies residues 393–413; sequence IWTQVLAALSVSLGSLVVGFV. Over 414-440 the chain is Extracellular; it reads SAYTSPALVSMTDRNITSFEVTQDAGS. Residue Asn428 is glycosylated (N-linked (GlcNAc...) asparagine). A helical membrane pass occupies residues 441–461; it reads WVGGIMPLAGLAGGIAGGPLI. Over 462 to 473 the chain is Cytoplasmic; it reads EYLGRRNTILAT. A helical transmembrane segment spans residues 474-494; sequence AVPFIVSSLLIACAVNVAMVL. The Extracellular portion of the chain corresponds to 495–497; sequence CGR. Residues 498–518 form a helical membrane-spanning segment; it reads FLAGFCVGIASLSLPVYLGET. Over 519–528 the chain is Cytoplasmic; sequence VQPEVRGTLG. A helical membrane pass occupies residues 529 to 549; sequence LLPTAFGNIGILLCFVAGSFM. Asn550 carries N-linked (GlcNAc...) asparagine glycosylation. Topologically, residues 550–552 are extracellular; the sequence is NWS. Residues 553–573 traverse the membrane as a helical segment; it reads MLAFLGAALPVPFLILMFLIP. Residues 574–636 are Cytoplasmic-facing; it reads ETPRWFVGRG…ELLKLNNLKP (63 aa). Residues 637 to 657 traverse the membrane as a helical segment; the sequence is LSISLGLMFFQQFSGINAVIF. The Extracellular segment spans residues 658–673; it reads YTVQIFKDAGSTIDGN. Residues 674-694 form a helical membrane-spanning segment; sequence LCTIIVGIVNFLATFIGIVLI. At 695 to 700 the chain is on the cytoplasmic side; it reads DRAGRK. A helical transmembrane segment spans residues 701-721; sequence ILLYVSDIAMVLTLFVLGGFF. The Extracellular segment spans residues 722–740; the sequence is YCKTYGPDVSHLGWLPLTC. A helical transmembrane segment spans residues 741–761; that stretch reads FVIYILGFSLGFGPIPWLMMG. Over 762–767 the chain is Cytoplasmic; the sequence is EILPAK. Residues 768-788 form a helical membrane-spanning segment; sequence IRGSAASVATAFNWFCTFVVT. Residues 789 to 801 are Extracellular-facing; the sequence is KTFQDLTVAMGAH. Residues 802–822 traverse the membrane as a helical segment; the sequence is GAFWLFGAICFVGLFFVIIYV. Topologically, residues 823–857 are cytoplasmic; sequence PETQGKTLEDIERKMMGRVRRMSSVANIKPLSFNM. Phosphoserine is present on residues Ser845 and Ser846.

It belongs to the major facilitator superfamily. Sugar transporter (TC 2.A.1.1) family. Trehalose transporter subfamily. Expressed in perineurial glia of the outer layer of the nervous system that forms the blood brain barrier (at protein level). Expressed in the fat body (at protein level). As to expression, may be specifically expressed in perineurial glia (at protein level). In terms of tissue distribution, may be specifically expressed in the fat body (at protein level).

Its subcellular location is the cell membrane. The protein localises to the vesicle. It carries out the reaction alpha,alpha-trehalose(in) = alpha,alpha-trehalose(out). The enzyme catalyses D-glucose(out) = D-glucose(in). Low-capacity facilitative transporter for trehalose. Can also transport glucose. Does not transport maltose, sucrose, lactose or fructose. Mediates the bidirectional transfer of trehalose. Responsible for the transport of trehalose synthesized in the fat body and the incorporation of trehalose into other tissues that require a carbon source, thereby regulating trehalose levels in the hemolymph. Required in glial cells of the blood brain barrier to fuel glycolysis but not required in neurons. Neurons rely on the citric acid cycle for their energy needs and utilise alanine and lactate, by-products of glial cell glycolysis released into the hemolymph, as fuel. Increased expression in glial cells of the blood brain barrier during starvation and increased cell surface localization enhances carbohydrate uptake to protect the central nervous system from restricted nutrient availability. The polypeptide is Trehalose transporter 1 (Drosophila melanogaster (Fruit fly)).